The sequence spans 121 residues: Large ribosomal subunit protein P2 (121 aa).

The segment covering 72-99 (VAVPSGGAPAAATAAAEAPKGGDKAAAP) has biased composition (low complexity). The segment at 72-121 (VAVPSGGAPAAATAAAEAPKGGDKAAAPPKEEKKEESEESDADMGFSPFD) is disordered.

The protein belongs to the eukaryotic ribosomal protein P1/P2 family. As to quaternary structure, P1 and P2 exist as dimers at the large ribosomal subunit. In terms of processing, phosphorylated.

In terms of biological role, plays an important role in the elongation step of protein synthesis. This chain is Large ribosomal subunit protein P2, found in Taenia solium (Pork tapeworm).